We begin with the raw amino-acid sequence, 190 residues long: E3 ubiquitin-protein ligase RNF4 (190 aa).

The segment at 1 to 16 (MSTRKRRGGAINSRQA) is required for ubiquitination activity. The disordered stretch occupies residues 1 to 29 (MSTRKRRGGAINSRQAQKRTREATSTPEI). The tract at residues 4–61 (RKRRGGAINSRQAQKRTREATSTPEISLEAEPIELVETAGDEIVDLTCESLEPVVVDL) is mediates interaction with TRPS1. 4 short sequence motifs (SUMO interaction motif) span residues 36 to 39 (IELV), 46 to 49 (IVDL), 57 to 59 (VVV), and 67 to 70 (VVIV). Phosphoserine occurs at positions 94 and 95. Residues C132, C135, C154, H156, C159, C162, C173, and C176 each coordinate Zn(2+). The RING-type zinc-finger motif lies at 132 to 177 (CPICMDGYSEIVQNGRLIVSTECGHVFCSQCLRDSLKNANTCPTCR).

Homodimer (via RING-type zinc finger domain). Interacts with GSC2. Interacts with AR/the androgen receptor and TBP. Interacts with TCF20. Interacts with PATZ1. Interacts with TRPS1; negatively regulates TRPS1 transcriptional repressor activity. Interacts with PML (isoform PML-1, isoform PML-2, isoform PML-3, isoform PML-4, isoform PML-5 and isoform PML-6). Interacts with PRDM1/Blimp-1. Post-translationally, sumoylated; conjugated by one or two SUMO1 moieties. In terms of processing, autoubiquitinated. Widely expressed at low levels in many tissues; highly expressed in testis.

It localises to the cytoplasm. The protein localises to the nucleus. Its subcellular location is the PML body. It carries out the reaction S-ubiquitinyl-[E2 ubiquitin-conjugating enzyme]-L-cysteine + [acceptor protein]-L-lysine = [E2 ubiquitin-conjugating enzyme]-L-cysteine + N(6)-ubiquitinyl-[acceptor protein]-L-lysine.. It participates in protein modification; protein ubiquitination. In terms of biological role, E3 ubiquitin-protein ligase which binds polysumoylated chains covalently attached to proteins and mediates 'Lys-6'-, 'Lys-11'-, 'Lys-48'- and 'Lys-63'-linked polyubiquitination of those substrates and their subsequent targeting to the proteasome for degradation. Regulates the degradation of several proteins including PML and the transcriptional activator PEA3. Involved in chromosome alignment and spindle assembly, it regulates the kinetochore CENPH-CENPI-CENPK complex by targeting polysumoylated CENPI to proteasomal degradation. Regulates the cellular responses to hypoxia and heat shock through degradation of respectively EPAS1 and PARP1. Alternatively, it may also bind DNA/nucleosomes and have a more direct role in the regulation of transcription for instance enhancing basal transcription and steroid receptor-mediated transcriptional activation. Catalyzes ubiquitination of sumoylated PARP1 in response to PARP1 trapping to chromatin, leading to PARP1 removal from chromatin by VCP/p97. The sequence is that of E3 ubiquitin-protein ligase RNF4 from Homo sapiens (Human).